Reading from the N-terminus, the 1801-residue chain is Protein mono-ADP-ribosyltransferase PARP14 (1801 aa).

Ser-33 carries the phosphoserine modification. The segment at 109–132 (SKTKEDVKEPDVSEELDTKLPLDG) is disordered. Macro domains follow at residues 791–978 (KCFS…KTVF), 1003–1190 (WEKG…ARRA), and 1216–1387 (DSGV…KKRE). Residues Asn-824, Leu-833, 922–926 (SSGVF), Asp-961, 1023–1024 (VQ), Ser-1034, 1046–1049 (LSKS), 1133–1137 (GTGNL), 1175–1178 (DHEN), 1235–1236 (DI), Ser-1247, Val-1258, 1332–1336 (GTGNA), and Phe-1371 contribute to the a glycoprotein site. Phosphoserine occurs at positions 1403 and 1411. The WWE domain maps to 1523–1601 (EQESRADCIS…SLSVQRLTKS (79 aa)). Residues 1605–1801 (IPAHWSDMKQ…YPEYLITFRK (197 aa)) form the PARP catalytic domain.

Belongs to the ARTD/PARP family. As to quaternary structure, interacts with STAT6. Interacts with PARP10. Interacts with PARP9 in IFNG-stimulated macrophages; the interaction prevents PARP14-mediated STAT1 and STAT6 ADP-riboslylation. In terms of processing, auto-ADP-ribosylated. Expressed in macrophages.

Its subcellular location is the nucleus. It is found in the cytoplasm. It catalyses the reaction L-glutamyl-[protein] + NAD(+) = 5-O-(ADP-D-ribosyl)-L-glutamyl-[protein] + nicotinamide. In terms of biological role, ADP-ribosyltransferase that mediates mono-ADP-ribosylation of glutamate residues on target proteins. In contrast to PARP1 and PARP2, it is not able to mediate poly-ADP-ribosylation. Has been shown to catalyze the mono-ADP-ribosylation of STAT1 at 'Glu-657' and 'Glu-705', thus decreasing STAT1 phosphorylation which negatively regulates pro-inflammatory cytokine production in macrophages in response to IFNG stimulation. However, the role of ADP-ribosylation in the prevention of STAT1 phosphorylation has been called into question and it has been suggested that the inhibition of phosphorylation may be the result of sumoylation of STAT1 'Lys-703'. Mono-ADP-ribosylates STAT6; enhancing STAT6-dependent transcription. In macrophages, positively regulates MRC1 expression in response to IL4 stimulation by promoting STAT6 phosphorylation. Mono-ADP-ribosylates PARP9. This chain is Protein mono-ADP-ribosyltransferase PARP14, found in Homo sapiens (Human).